The chain runs to 198 residues: Recombination protein RecR (198 aa).

The segment at 57 to 72 (CAQCRTLTEHSLCEYC) adopts a C4-type zinc-finger fold. Positions 80–175 (SLLCIVESPA…RTTRIAHGIP (96 aa)) constitute a Toprim domain.

This sequence belongs to the RecR family.

In terms of biological role, may play a role in DNA repair. It seems to be involved in an RecBC-independent recombinational process of DNA repair. It may act with RecF and RecO. In Methylococcus capsulatus (strain ATCC 33009 / NCIMB 11132 / Bath), this protein is Recombination protein RecR.